The sequence spans 551 residues: Malate synthase, glyoxysomal (551 aa).

The active-site Proton acceptor is the Arg-174. Asp-458 acts as the Proton donor in catalysis.

It belongs to the malate synthase family.

The protein localises to the glyoxysome. It catalyses the reaction glyoxylate + acetyl-CoA + H2O = (S)-malate + CoA + H(+). It functions in the pathway carbohydrate metabolism; glyoxylate cycle; (S)-malate from isocitrate: step 2/2. This chain is Malate synthase, glyoxysomal (PMS1), found in Candida tropicalis (Yeast).